The chain runs to 1354 residues: MRPGEESHLVPKEIENAADEPRVLCIVQDTTSCKNINERITLNLPASTSVKQLYEDVSSKAGYVSGTFSLMWGNGASNMVDMAALDPTPDRTLQEAGFEAGKKNFLHLTDKNGEQPQLASDESGTADSSGLDDSTQEKFIGPLPREESVACTSDYVSQNYSYSSLLSKSDTGYVGLVNQAMTCYLNSLLQTLFMTPEFRNALYKWEFEESEEDPVSSIPYQLQRLFVLLQTSKKRAIETTDVTRSFGWDSSEAWQQHDVQELCRVMFDALEQKWKQTEQADLINQLYQGKLKDYVKCLECGYESWRIDTFLDIPLVIRPFGSNTAFGSMEEALQAFIQPETLDGPNQYFCERCKRKCDARKGLKFLHFPYLLTLQLKRFDFDYTSMHRIKLNDRMTFPDELDMSPFIDVEDEKSPQTDSCTDSGAENEGSCHSDQMSNDFSTDDAVDEGICLETNSNIEKLNKSVSEKNSLYELFSVMVHSGSAAGGHYYACIKSFADGQWYSFNDQHVSRITQEDIKKTYGGSTGNRGYYSSAFASSTNAYMLMYRLKNPARNAKFPEAIEFPEHIKLLVQKEQEQEEQEKRQREIERNTCKLKLFCMHPVKQIMMESKLEVHKDKTMKEAVEIAHKLMDLEGVISLDCCRLVKYDEFHDYLERSYEDEEDRTMGYLLGGVKSSYMFDLLLETKRSDQVFQSYKPGEVMVKVYVVDLKTETVAPPVSVRAYLSQTIIEFKQLISKSVDLLPDTMRVVLERCYNDLRLLNVANKTLKAEGFFRSNKVFVESSDSLDYQLVFTDSHLWKLLDRHANTIRLYVSLPEHTPQTARSVGPKGGGDSNLSEDYCSRVKGNVKSVDAILEESTEKLKSLSLQQHQDGGNGDSSKSTEGSDFENIDSPLNEADSGSADNRELENRILPADPENNFQPEERSDSDVNNDRSTSSVDSDILSSSHSSDTLCNADSAPIPLANGLDSHSITSSRRSKANDGKKETWDTAEEDSGTDSEYDESGKSRGEAQYMYFKAEPHAGEGCLGEGNKCLLVSVDKRITLAAFKQQLESFVGVSSSQFKVFRVYASNQEFESVRLNETLSSFSDDNKITIRLGRALKKGEYRVKIFQLLVNEPEPCKFLLDAVFSKGMTVRQSKEELLPLLRDQCGLDLSIDRFRLRKKTWKNPGTVFLDYHVYENESISSSWEVFLEALDETEKMKSMSQLSLFTKRWRPSELKLDPFKEIVMESNSVDELRDKICDISAIPLENLEFAKGRGTFPCDISVLEIHQDLDWNPKVSTLNAWPLYISDDGAVIFYRDKMEELVELTDEQRNDLAKKESSRLQKTGHRVTYSPRKEKALKIYLDGPSNKDSSQD.

Polar residues predominate over residues 114–133; it reads EQPQLASDESGTADSSGLDD. Residues 114–139 are disordered; that stretch reads EQPQLASDESGTADSSGLDDSTQEKF. Residues 174-549 form the USP domain; that stretch reads VGLVNQAMTC…NAYMLMYRLK (376 aa). C183 (nucleophile) is an active-site residue. The tract at residues 408 to 438 is disordered; it reads DVEDEKSPQTDSCTDSGAENEGSCHSDQMSN. A compositionally biased stretch (polar residues) spans 416 to 438; sequence QTDSCTDSGAENEGSCHSDQMSN. The active-site Proton acceptor is the H488. Over residues 863-882 the composition is skewed to polar residues; that stretch reads LSLQQHQDGGNGDSSKSTEG. Disordered stretches follow at residues 863–1004 and 1314–1335; these read LSLQ…ESGK and LAKKESSRLQKTGHRVTYSPRK. Positions 920–930 are enriched in basic and acidic residues; that stretch reads PEERSDSDVNN. Over residues 933–949 the composition is skewed to low complexity; sequence STSSVDSDILSSSHSSD. Over residues 977–986 the composition is skewed to basic and acidic residues; it reads KANDGKKETW. Acidic residues predominate over residues 987 to 1000; the sequence is DTAEEDSGTDSEYD.

The protein belongs to the peptidase C19 family. USP47 subfamily.

The protein localises to the cytoplasm. The catalysed reaction is Thiol-dependent hydrolysis of ester, thioester, amide, peptide and isopeptide bonds formed by the C-terminal Gly of ubiquitin (a 76-residue protein attached to proteins as an intracellular targeting signal).. Functionally, ubiquitin-specific protease that specifically deubiquitinates monoubiquitinated DNA polymerase beta (polb), stabilizing polb thereby playing a role in base-excision repair (BER). The chain is Ubiquitin carboxyl-terminal hydrolase 47 (usp47) from Xenopus tropicalis (Western clawed frog).